Here is a 335-residue protein sequence, read N- to C-terminus: Nucleoid-associated protein PputW619_4243 (335 aa).

The protein belongs to the YejK family.

It localises to the cytoplasm. Its subcellular location is the nucleoid. The polypeptide is Nucleoid-associated protein PputW619_4243 (Pseudomonas putida (strain W619)).